Here is a 250-residue protein sequence, read N- to C-terminus: Heat stress transcription factor C-1b (250 aa).

Residues 129–182 (EEGEEVRGTIEAVQRLREEQRGMEEELQAMDQRLRAAESRPGQMMAFLAKLADE) adopt a coiled-coil conformation. Residues 144-180 (LREEQRGMEEELQAMDQRLRAAESRPGQMMAFLAKLA) are hydrophobic repeat HR-A/B. Residues 199 to 226 (AAGNNGSDPCKRRRIGADTGRGGVATGG) are disordered. The short motif at 209–212 (KRRR) is the Nuclear localization signal element.

This sequence belongs to the HSF family. Class C subfamily. As to quaternary structure, homotrimer. In terms of processing, exhibits temperature-dependent phosphorylation.

The protein resides in the nucleus. Its function is as follows. Transcriptional regulator that specifically binds DNA of heat shock promoter elements (HSE). This chain is Heat stress transcription factor C-1b (HSFC1B), found in Oryza sativa subsp. japonica (Rice).